Here is a 189-residue protein sequence, read N- to C-terminus: Transcription factor FapR (189 aa).

This sequence belongs to the FapR family.

Its function is as follows. Transcriptional factor involved in regulation of membrane lipid biosynthesis by repressing genes involved in fatty acid and phospholipid metabolism. The protein is Transcription factor FapR of Listeria monocytogenes serotype 4b (strain CLIP80459).